The following is a 134-amino-acid chain: Terepressin/terephysin (134 aa).

An N-terminal signal peptide occupies residues Met1–Gly33. Cys34 and Cys39 are disulfide-bonded. The propeptide occupies Lys44–Val50. Intrachain disulfides connect Cys56-Cys100, Cys59-Cys73, Cys67-Cys90, Cys74-Cys80, Cys107-Cys121, Cys115-Cys133, and Cys122-Cys127.

It belongs to the vasopressin/oxytocin family. Contains 7 disulfide bonds. As to expression, expressed by the venom duct.

The protein localises to the secreted. This chain is Terepressin/terephysin, found in Terebra anilis (Auger snail).